A 289-amino-acid chain; its full sequence is MRAILRGLLPATLLPLAAYAQEATIKEVHDAPAVRGSIIANMLQEHDNPFTLYPYDTNYLIYTNTSDLNKEAISTYNWSENARKDEVKFQLSLAFPLWRGILGPNSVLGASYTQKSWWQLSNSKESSPFRETNYEPQLFLGFATDYRFAGWTLRDVEMGYNHDSNGRSDPTSRSWNRLYTRLMAENGNWLVEVKPWYVIGSTDDNPDITKYMGYYQLKIGYHLGEAVLSAKGQYNWNTGYGGAEVGLSYPVTKHVRLYTQVYSGYGESLIDYNFNQTRVGVGVMLNDIF.

The first 20 residues, 1–20 (MRAILRGLLPATLLPLAAYA), serve as a signal peptide directing secretion. The Periplasmic portion of the chain corresponds to 21 to 52 (QEATIKEVHDAPAVRGSIIANMLQEHDNPFTL). Residues 53-65 (YPYDTNYLIYTNT) form a beta stranded membrane-spanning segment. Residues 66 to 84 (SDLNKEAISTYNWSENARK) are Extracellular-facing. A beta stranded membrane pass occupies residues 85–99 (DEVKFQLSLAFPLWR). Residues 100–105 (GILGPN) lie on the Periplasmic side of the membrane. Residues 106–118 (SVLGASYTQKSWW) form a beta stranded membrane-spanning segment. Residues 119-128 (QLSNSKESSP) lie on the Extracellular side of the membrane. Ser126 contributes to the Ca(2+) binding site. A beta stranded transmembrane segment spans residues 129-148 (FRETNYEPQLFLGFATDYRF). Topologically, residues 149 to 150 (AG) are periplasmic. Residues 151 to 164 (WTLRDVEMGYNHDS) form a beta stranded membrane-spanning segment. The Proton acceptor role is filled by His162. Catalysis depends on Ser164, which acts as the Nucleophile. The Extracellular portion of the chain corresponds to 165–173 (NGRSDPTSR). Residues Arg167 and Ser172 each contribute to the Ca(2+) site. Residues 174-186 (SWNRLYTRLMAEN) traverse the membrane as a beta stranded segment. Residues 187–188 (GN) lie on the Periplasmic side of the membrane. Residues 189 to 198 (WLVEVKPWYV) traverse the membrane as a beta stranded segment. Topologically, residues 199–216 (IGSTDDNPDITKYMGYYQ) are extracellular. Ca(2+) is bound at residue Asp204. A beta stranded transmembrane segment spans residues 217–223 (LKIGYHL). The Periplasmic portion of the chain corresponds to 224 to 225 (GE). The chain crosses the membrane as a beta stranded span at residues 226–234 (AVLSAKGQY). Topologically, residues 235 to 241 (NWNTGYG) are extracellular. The chain crosses the membrane as a beta stranded span at residues 242 to 250 (GAEVGLSYP). The Periplasmic portion of the chain corresponds to 251-255 (VTKHV). Residues 256-265 (RLYTQVYSGY) form a beta stranded membrane-spanning segment. Residues 266–274 (GESLIDYNF) are Extracellular-facing. The beta stranded transmembrane segment at 275 to 286 (NQTRVGVGVMLN) threads the bilayer. Topologically, residues 287–289 (DIF) are periplasmic.

This sequence belongs to the phospholipase A1 family. As to quaternary structure, homodimer; dimerization is reversible, and the dimeric form is the active one. It depends on Ca(2+) as a cofactor.

Its subcellular location is the cell outer membrane. The enzyme catalyses a 1,2-diacyl-sn-glycero-3-phosphocholine + H2O = a 2-acyl-sn-glycero-3-phosphocholine + a fatty acid + H(+). The catalysed reaction is a 1,2-diacyl-sn-glycero-3-phosphocholine + H2O = a 1-acyl-sn-glycero-3-phosphocholine + a fatty acid + H(+). Its function is as follows. Hydrolysis of phosphatidylcholine with phospholipase A2 (EC 3.1.1.4) and phospholipase A1 (EC 3.1.1.32) activities. This chain is Phospholipase A1 (pldA), found in Salmonella typhi.